The following is a 176-amino-acid chain: Warthog protein 5 (176 aa).

The N-terminal stretch at 1-21 is a signal peptide; sequence MCSMWLMASWLMAFVAGSTLA. N70 is a glycosylation site (N-linked (GlcNAc...) asparagine).

In terms of tissue distribution, expressed in seam cells, excretory cell, reproductive system, pharynx, pharyngeal-intestinal valve cells, neurons and neuronal support cells.

The protein resides in the secreted. Intercellular signal essential for a variety of patterning events during development. In Caenorhabditis elegans, this protein is Warthog protein 5 (wrt-5).